Reading from the N-terminus, the 599-residue chain is UvrABC system protein C (599 aa).

A GIY-YIG domain is found at 18-96 (QLPGVYRMLG…IKQHRPPYNI (79 aa)). The region spanning 207–242 (KELNQELIAKMEEAAEQLAFEKAMFYRDRLGLLREV) is the UVR domain.

Belongs to the UvrC family. Interacts with UvrB in an incision complex.

Its subcellular location is the cytoplasm. Its function is as follows. The UvrABC repair system catalyzes the recognition and processing of DNA lesions. UvrC both incises the 5' and 3' sides of the lesion. The N-terminal half is responsible for the 3' incision and the C-terminal half is responsible for the 5' incision. This is UvrABC system protein C from Acinetobacter baylyi (strain ATCC 33305 / BD413 / ADP1).